The following is a 522-amino-acid chain: Maturase K (522 aa).

This sequence belongs to the intron maturase 2 family. MatK subfamily.

The protein resides in the plastid. It localises to the chloroplast. In terms of biological role, usually encoded in the trnK tRNA gene intron. Probably assists in splicing its own and other chloroplast group II introns. The protein is Maturase K of Iris orientalis (Yellowband iris).